A 610-amino-acid chain; its full sequence is UvrABC system protein C (610 aa).

Residues 12-91 (TSPGVYLYKN…IKQKKPRFNI (80 aa)) enclose the GIY-YIG domain. The region spanning 202 to 237 (SDLKQSLTARMNKAAEGMQFELAAKYRDLITTVEDL) is the UVR domain.

The protein belongs to the UvrC family. As to quaternary structure, interacts with UvrB in an incision complex.

The protein resides in the cytoplasm. The UvrABC repair system catalyzes the recognition and processing of DNA lesions. UvrC both incises the 5' and 3' sides of the lesion. The N-terminal half is responsible for the 3' incision and the C-terminal half is responsible for the 5' incision. In Koribacter versatilis (strain Ellin345), this protein is UvrABC system protein C.